The sequence spans 271 residues: MGHMVNAIAQIDEFVNLGANSIETDVSFDSSANPEYTYHGVPCDCRRWCKKWEYFNNFLKALRKATTPGDSKYHEKLVLVVFDLKTGSLYDNQASDAGKKLAKSLLQNYWNNGNNGGRAYIVLSIPNLAHYKLIAGFKEALTSEGHPELMDKVGYDFSGNDDIGDVANAYKEAGVTGHVWQSDGITNCLLRGLDRVRKAVANRDSSNGYVNKVYYWTVDKRQSTRDALDAGVDGIMTNYPDVIADVLNESAYKAKFRIASYDDNPWETFKN.

His3 is a catalytic residue. Mg(2+)-binding residues include Glu23 and Asp25. His39 functions as the Nucleophile in the catalytic mechanism. 2 cysteine pairs are disulfide-bonded: Cys43–Cys49 and Cys45–Cys188. Asp83 provides a ligand contact to Mg(2+). A glycan (N-linked (GlcNAc...) asparagine) is linked at Asn248.

This sequence belongs to the arthropod phospholipase D family. Class II subfamily. Requires Mg(2+) as cofactor. Expressed by the venom gland.

It is found in the secreted. It catalyses the reaction an N-(acyl)-sphingosylphosphocholine = an N-(acyl)-sphingosyl-1,3-cyclic phosphate + choline. It carries out the reaction an N-(acyl)-sphingosylphosphoethanolamine = an N-(acyl)-sphingosyl-1,3-cyclic phosphate + ethanolamine. The enzyme catalyses a 1-acyl-sn-glycero-3-phosphocholine = a 1-acyl-sn-glycero-2,3-cyclic phosphate + choline. The catalysed reaction is a 1-acyl-sn-glycero-3-phosphoethanolamine = a 1-acyl-sn-glycero-2,3-cyclic phosphate + ethanolamine. Its function is as follows. Dermonecrotic toxins cleave the phosphodiester linkage between the phosphate and headgroup of certain phospholipids (sphingolipid and lysolipid substrates), forming an alcohol (often choline) and a cyclic phosphate. This toxin acts on sphingomyelin (SM). It may also act on ceramide phosphoethanolamine (CPE), lysophosphatidylcholine (LPC) and lysophosphatidylethanolamine (LPE), but not on lysophosphatidylserine (LPS), and lysophosphatidylglycerol (LPG). It acts by transphosphatidylation, releasing exclusively cyclic phosphate products as second products. Induces dermonecrosis, hemolysis, increased vascular permeability, edema, inflammatory response, and platelet aggregation. The polypeptide is Dermonecrotic toxin LarSicTox-alphaIB1c (Loxosceles arizonica (Arizona brown spider)).